Reading from the N-terminus, the 637-residue chain is Biosynthetic arginine decarboxylase (637 aa).

Residue Lys-101 is modified to N6-(pyridoxal phosphate)lysine. Substrate is bound at residue 286–296 (FDVGGGLAVDY).

It belongs to the Orn/Lys/Arg decarboxylase class-II family. SpeA subfamily. The cofactor is Mg(2+). Pyridoxal 5'-phosphate is required as a cofactor.

It carries out the reaction L-arginine + H(+) = agmatine + CO2. The protein operates within amine and polyamine biosynthesis; agmatine biosynthesis; agmatine from L-arginine: step 1/1. Functionally, catalyzes the biosynthesis of agmatine from arginine. The polypeptide is Biosynthetic arginine decarboxylase (Shewanella sp. (strain MR-7)).